Reading from the N-terminus, the 65-residue chain is Ferredoxin-like protein in vnf region (65 aa).

4Fe-4S ferredoxin-type domains follow at residues 2–30 (AMAI…FRDD) and 32–65 (YAIE…PLDD). 8 residues coordinate [4Fe-4S] cluster: cysteine 10, cysteine 13, cysteine 16, cysteine 20, cysteine 39, cysteine 42, cysteine 50, and cysteine 54.

[4Fe-4S] cluster is required as a cofactor.

This Azotobacter vinelandii protein is Ferredoxin-like protein in vnf region.